A 306-amino-acid chain; its full sequence is Ornithine carbamoyltransferase (306 aa).

Residues 53 to 56 (STRT), Gln80, Arg104, and 131 to 134 (HPCQ) contribute to the carbamoyl phosphate site. L-ornithine-binding positions include Asn162, Asp219, and 223 to 224 (SM). Residues 259–260 (CL) and Arg287 each bind carbamoyl phosphate.

The protein belongs to the aspartate/ornithine carbamoyltransferase superfamily. OTCase family.

The protein resides in the cytoplasm. It carries out the reaction carbamoyl phosphate + L-ornithine = L-citrulline + phosphate + H(+). Its pathway is amino-acid degradation; L-arginine degradation via ADI pathway; carbamoyl phosphate from L-arginine: step 2/2. Functionally, reversibly catalyzes the transfer of the carbamoyl group from carbamoyl phosphate (CP) to the N(epsilon) atom of ornithine (ORN) to produce L-citrulline. In Acinetobacter baumannii (strain AYE), this protein is Ornithine carbamoyltransferase.